Here is a 90-residue protein sequence, read N- to C-terminus: Small ribosomal subunit protein bS20 (90 aa).

The protein belongs to the bacterial ribosomal protein bS20 family.

Binds directly to 16S ribosomal RNA. The chain is Small ribosomal subunit protein bS20 from Francisella philomiragia subsp. philomiragia (strain ATCC 25017 / CCUG 19701 / FSC 153 / O#319-036).